We begin with the raw amino-acid sequence, 1041 residues long: Sarcoplasmic/endoplasmic reticulum calcium ATPase 2 (1041 aa).

Residues 1-48 (MENAHTKTVEEVLAYFGVNESTGLSLEQVKKLKEKWGSNELPAEEGKT) lie on the Cytoplasmic side of the membrane. Residues 49-69 (LLELVIEQFEDLLVRILLLAA) traverse the membrane as a helical segment. At 70 to 89 (CISFVLAWFEEGEETITAFV) the chain is on the lumenal side. A helical transmembrane segment spans residues 90–110 (EPFVILLILVANAIVGVWQER). At 111-253 (NAENAIEALK…QERTPLQQKL (143 aa)) the chain is on the cytoplasmic side. A helical membrane pass occupies residues 254-273 (DEFGEQLSKVISLICIAVWI). Residues 274 to 295 (INIGHFNDPVHGGSWIRGAIYY) lie on the Lumenal side of the membrane. A helical transmembrane segment spans residues 296 to 313 (FKIAVALAVAAIPEGLPA). Val-304, Ala-305, Ile-307, and Glu-309 together coordinate Ca(2+). The Cytoplasmic portion of the chain corresponds to 314 to 756 (VITTCLALGT…EEGRAIYNNM (443 aa)). Asp-351 serves as the catalytic 4-aspartylphosphate intermediate. Residues Asp-351 and Thr-353 each coordinate Mg(2+). ATP contacts are provided by Thr-353, Glu-442, Arg-489, Lys-514, Arg-559, Thr-624, Gly-625, Asp-626, Arg-677, and Lys-683. Asp-702 is a binding site for Mg(2+). ATP is bound at residue Asn-705. A helical transmembrane segment spans residues 757-776 (KQFIRYLISSNVGEVVCIFL). Ca(2+) is bound by residues Asn-767 and Glu-770. Residues 777 to 786 (TAALGFPEAL) are Lumenal-facing. A helical transmembrane segment spans residues 787 to 807 (IPVQLLWVNLVTDGLPATALG). The segment at 787–807 (IPVQLLWVNLVTDGLPATALG) is interaction with PLN. Ca(2+)-binding residues include Asn-795, Thr-798, and Asp-799. Over 808 to 827 (FNPPDLDIMNKPPRNPKEPL) the chain is Cytoplasmic. Residues 828-850 (ISGWLFFRYLAIGCYVGAATVGA) traverse the membrane as a helical segment. Residues 851–896 (AAWWFIAADGGPRVTFYQLSHFLQCKEDNPDFSGVDCVVFESPYPM) are Lumenal-facing. Cys-875 and Cys-887 are disulfide-bonded. Residues 897-916 (TMALSVLVTIEMCNALNSLS) traverse the membrane as a helical segment. Glu-907 serves as a coordination point for Ca(2+). Residues 917–929 (ENQSLMRMPPWEN) lie on the Cytoplasmic side of the membrane. The helical transmembrane segment at 930 to 948 (IWLVGAICLSMSLHFLILY) threads the bilayer. The segment at 931 to 942 (WLVGAICLSMSL) is interaction with PLN. Residues 949–963 (VEPLPIIFQITPLNV) are Lumenal-facing. A helical transmembrane segment spans residues 964 to 984 (TQWLMVLKISLPVILLDETLK). Over 985 to 1041 (YVARNYLEPGKDSVQPATKPCSLSACTEGVSWPFVFITLPLVIWLYSTDTNFSDMFW) the chain is Cytoplasmic.

Belongs to the cation transport ATPase (P-type) (TC 3.A.3) family. Type IIA subfamily. Interacts with sarcolipin (SLN). Interacts with phospholamban (PLN). Interacts with myoregulin (MRLN). Interacts with DWORF. Interacts with TMX2. It depends on Mg(2+) as a cofactor. Only isoform 2 is detected in heart, while both isoforms are expressed in brain, with isoform 2 being predominant.

Its subcellular location is the endoplasmic reticulum membrane. It is found in the sarcoplasmic reticulum membrane. The enzyme catalyses Ca(2+)(in) + ATP + H2O = Ca(2+)(out) + ADP + phosphate + H(+). With respect to regulation, reversibly inhibited by phospholamban (PLN) at low calcium concentrations. Inhibited by sarcolipin (SLN) and myoregulin (MRLN). Enhanced by DWORF; DWORF increases activity by displacing sarcolipin (SLN), phospholamban (PLN) and myoregulin (MRLN). Functionally, this magnesium-dependent enzyme catalyzes the hydrolysis of ATP coupled with the translocation of calcium from the cytosol to the sarcoplasmic reticulum lumen. Isoform SERCA2A is involved in the regulation of the contraction/relaxation cycle. May act as a regulator of TNFSF11-mediated Ca(2+) signaling during osteoclastogenesis. The sequence is that of Sarcoplasmic/endoplasmic reticulum calcium ATPase 2 (ATP2A2) from Gallus gallus (Chicken).